A 347-amino-acid chain; its full sequence is Protein YIPF1 homolog (347 aa).

The interval 1-115 (MSNYNNKHHD…FSDNVPLNTN (115 aa)) is disordered. Over 1 to 166 (MSNYNNKHHD…FFNLIRENPD (166 aa)) the chain is Cytoplasmic. A compositionally biased stretch (polar residues) spans 34-47 (NLFPNTNIDYNDYT). Low complexity-rich tracts occupy residues 48–67 (QNRGQQQQQQPAYQPDLQFQ) and 76–104 (NSNTSPNNNNNNNSNNNNSNKIGGNSSNN). Residues 105–115 (KFSDNVPLNTN) show a composition bias toward polar residues. Residues 167–187 (LYGPFWVLTSLVFIVAVTSNL) form a helical membrane-spanning segment. Topologically, residues 188-207 (NEYFHSSDHKSWEVDIQKIV) are lumenal. Residues 208–228 (YSAITIYGYSFVIPLILWGIF) traverse the membrane as a helical segment. The Cytoplasmic portion of the chain corresponds to 229–232 (KWMN). The helical transmembrane segment at 233–253 (LGLRLLDMLCIYGYTLFIFVP) threads the bilayer. Topologically, residues 254–255 (AS) are lumenal. Residues 256 to 276 (ILCVIPLQLVQWIIVAIASIV) traverse the membrane as a helical segment. Residues 277 to 296 (SGLFLVTNIFTPLKEDFTKR) are Cytoplasmic-facing. Residues 297 to 317 (GLIICAVIGALHIGLALVLKL) traverse the membrane as a helical segment. The Lumenal portion of the chain corresponds to 318-347 (YFFANSTENFTISDSSSTPTPTPTNTTKLL). N-linked (GlcNAc...) asparagine glycans are attached at residues Asn-322, Asn-326, and Asn-342.

It belongs to the YIP1 family.

The protein localises to the golgi apparatus. It is found in the cis-Golgi network membrane. Its subcellular location is the trans-Golgi network membrane. The protein resides in the late endosome membrane. This is Protein YIPF1 homolog (yipf1) from Dictyostelium discoideum (Social amoeba).